The primary structure comprises 350 residues: Protein SGT1 homolog A (350 aa).

TPR repeat units lie at residues 2–35 (AKELADKAKEAFVDDDFDVAVDLYSKAIDLDPNC), 37–69 (EFFADRAQAYIKLESFTEAVADANKAIELDPSL), and 71–103 (KAYLRKGTACMKLEEYRTAKTALEKGASITPSE). Residues 149–238 (TAKYRHEYYQ…ADIITWASLE (90 aa)) enclose the CS domain. In terms of domain architecture, SGS spans 260 to 350 (AYPSSKKVKD…DGMELKKWEI (91 aa)).

Belongs to the SGT1 family. As to quaternary structure, interacts with RAR1. Forms a ternary complex with RAR1 and barley HSP90.

In terms of biological role, functions in R gene-mediated resistance, but participates in a lower extent than SGT1B to RPP5-mediated resistance. Not required for RPM1, RPS2, RPS4 and RPS5-mediated resistance. Probably required for SCF-mediated ubiquitination, by coupling HSP90 to SCF complex for ubiquitination of HSP90 client proteins. The protein is Protein SGT1 homolog A (SGT1A) of Arabidopsis thaliana (Mouse-ear cress).